The primary structure comprises 196 residues: Heat shock protein beta-8 (196 aa).

Residues 1–34 (MADGQMPFPCHYTSRRRRDPFRDSPLSSRLLDDG) are disordered. Over residues 23–34 (DSPLSSRLLDDG) the composition is skewed to low complexity. S24 and S57 each carry phosphoserine. Phosphothreonine is present on T63. Asymmetric dimethylarginine occurs at positions 71 and 78. The sHSP domain maps to 74–185 (TAMTRFGVPA…PFGESSFNNE (112 aa)). Position 87 is a phosphoserine (S87). Residues 176-196 (PFGESSFNNELPQDGQEVTCT) form a disordered region. Polar residues predominate over residues 178 to 196 (GESSFNNELPQDGQEVTCT).

Belongs to the small heat shock protein (HSP20) family. In terms of assembly, monomer. Forms a ternary complex with BAG3 and HSPA1A. Component of the chaperone-assisted selective autophagy (CASA) complex consisting of BAG3, HSPA8/HSC70, HSPB8 and STUB1/CHIP. Interacts with HSPB1. Interacts with DNAJB6. Interacts with BAG3. In terms of processing, phosphorylated.

Its subcellular location is the cytoplasm. The protein localises to the nucleus. Involved in the chaperone-assisted selective autophagy (CASA), a crucial process for protein quality control, particularly in mechanical strained cells and tissues such as muscle. Displays temperature-dependent chaperone activity. This Bos taurus (Bovine) protein is Heat shock protein beta-8 (HSPB8).